We begin with the raw amino-acid sequence, 578 residues long: Octopamine receptor 2 (578 aa).

The Extracellular portion of the chain corresponds to 1–84 (MMSFPIALFA…YDSITIFITV (84 aa)). N-linked (GlcNAc...) asparagine glycans are attached at residues asparagine 13, asparagine 38, asparagine 46, and asparagine 59. A helical transmembrane segment spans residues 85–107 (AVVLTLITLWTILGNFFVLMALY). Topologically, residues 108–117 (RYGTLRTMSN) are cytoplasmic. The chain crosses the membrane as a helical span at residues 118-139 (CLIGNLAISDLLLAVTVLPIST). At 140–156 (VHDLLGYWVFGEFTCTL) the chain is on the extracellular side. Cysteine 154 and cysteine 239 form a disulfide bridge. A helical membrane pass occupies residues 157–177 (WLCMDVLYCTASIWGLCTVAF). The Cytoplasmic segment spans residues 178–197 (DRYLATVYPVWYHDQRSVRK). A helical membrane pass occupies residues 198–220 (AVGCIVFVWIFSIVISFAPFIGW). The Extracellular portion of the chain corresponds to 221-251 (QHMIPSFFSFNASIQRYQCILFTSSSYVLYS). N-linked (GlcNAc...) asparagine glycosylation is present at asparagine 231. The chain crosses the membrane as a helical span at residues 252-272 (SMGSFVIPAILMAFMYVRIFV). The Cytoplasmic portion of the chain corresponds to 273-495 (VLHNQSRGVK…ELREQRATKR (223 aa)). The chain crosses the membrane as a helical span at residues 496–517 (MLLIMACFCVCWMPFLFMYILR). Residues 518–531 (SVCDTCHMNQHFVA) are Extracellular-facing. The helical transmembrane segment at 532–553 (AIIWLGYVNSSLNPVLYTLFND) threads the bilayer. Topologically, residues 554 to 578 (DFKVAFKRLIGARSPSAYRSPGPRR) are cytoplasmic.

This sequence belongs to the G-protein coupled receptor 1 family.

It is found in the cell membrane. Its function is as follows. Receptor for octopamine. Octopamine (OA) is a neurotransmitter, neurohormone, and neuromodulator in invertebrates. This receptor induces a long lasting opening of voltage- independent chloride channels, a process which seems to involve protein phosphorylation but does not require either cAPK or PKC. The rank order of potency for agonists is p-synephrine &gt; p-octopamine &gt; xylometazoline &gt; B-HT920 &gt; norepinephrine = clonidine &gt; epinephrine &gt; p-tyramine &gt; phenylephrine = oxymetazoline = mehoxamine = dopamine &gt; serotonin &gt; histamine. For antagonists, the rank order is rauwolscine = mianserin &gt; phentolamine &gt; chlorpromazine &gt; spiperone &gt; yohimbine &gt; propanolol &gt; alprenolol &gt; prazosine &gt; pindolol. The protein is Octopamine receptor 2 of Lymnaea stagnalis (Great pond snail).